Reading from the N-terminus, the 54-residue chain is Large ribosomal subunit protein bL32c (54 aa).

It belongs to the bacterial ribosomal protein bL32 family.

The protein localises to the plastid. The protein resides in the chloroplast. This Piper cenocladum (Ant piper) protein is Large ribosomal subunit protein bL32c.